The sequence spans 247 residues: Mast cell protease 2 (247 aa).

A signal peptide spans methionine 1–alanine 19. A propeptide spans glycine 20–glutamate 21 (activation peptide). The region spanning isoleucine 22–arginine 245 is the Peptidase S1 domain. Cysteine 51 and cysteine 67 form a disulfide bridge. Histidine 66 acts as the Charge relay system in catalysis. Asparagine 80 is a glycosylation site (N-linked (GlcNAc...) asparagine). Catalysis depends on aspartate 110, which acts as the Charge relay system. 2 cysteine pairs are disulfide-bonded: cysteine 144/cysteine 209 and cysteine 175/cysteine 188. Residue serine 203 is the Charge relay system of the active site.

Belongs to the peptidase S1 family. Granzyme subfamily.

In Meriones unguiculatus (Mongolian jird), this protein is Mast cell protease 2.